Here is a 63-residue protein sequence, read N- to C-terminus: Small ribosomal subunit protein eS17 (63 aa).

This sequence belongs to the eukaryotic ribosomal protein eS17 family.

The polypeptide is Small ribosomal subunit protein eS17 (Methanosphaerula palustris (strain ATCC BAA-1556 / DSM 19958 / E1-9c)).